A 93-amino-acid polypeptide reads, in one-letter code: Large ribosomal subunit protein uL23cy (93 aa).

This sequence belongs to the universal ribosomal protein uL23 family. In terms of assembly, part of the 50S ribosomal subunit.

The protein resides in the plastid. Its subcellular location is the chloroplast. In terms of biological role, binds to 23S rRNA. The protein is Large ribosomal subunit protein uL23cy (rpl23-B) of Agrostis stolonifera (Creeping bentgrass).